Reading from the N-terminus, the 149-residue chain is Extracellular protease inhibitor 1 (149 aa).

An N-terminal signal peptide occupies residues 1 to 16 (MKSALLFTLVVAAVHA). Kazal-like domains are found at residues 29-86 (ESNE…SSTG) and 88-141 (QPPS…ACVG). Intrachain disulfides connect C35/C65 and C39/C58. N67 carries N-linked (GlcNAc...) asparagine glycosylation. 3 disulfide bridges follow: C94–C124, C98–C117, and C106–C139.

As to quaternary structure, interacts with host subtilisin-like protease P69B.

It is found in the secreted. Its function is as follows. Secreted effector that interacts with and inhibits the pathogenesis-related P69B subtilisin-like serine protease of host tomato. Inhibition of host proteases by a pathogen extracellular protease inhibitor forms a specific type of defense-counterdefense mechanism between plants and microbial pathogens. The protein is Extracellular protease inhibitor 1 of Phytophthora infestans (Potato late blight agent).